Here is a 380-residue protein sequence, read N- to C-terminus: Succinyl-diaminopimelate desuccinylase (380 aa).

Zn(2+) is bound at residue His66. Asp68 is an active-site residue. Asp99 provides a ligand contact to Zn(2+). Catalysis depends on Glu135, which acts as the Proton acceptor. Positions 136, 164, and 350 each coordinate Zn(2+).

The protein belongs to the peptidase M20A family. DapE subfamily. In terms of assembly, homodimer. Requires Zn(2+) as cofactor. Co(2+) is required as a cofactor.

It carries out the reaction N-succinyl-(2S,6S)-2,6-diaminopimelate + H2O = (2S,6S)-2,6-diaminopimelate + succinate. It functions in the pathway amino-acid biosynthesis; L-lysine biosynthesis via DAP pathway; LL-2,6-diaminopimelate from (S)-tetrahydrodipicolinate (succinylase route): step 3/3. Catalyzes the hydrolysis of N-succinyl-L,L-diaminopimelic acid (SDAP), forming succinate and LL-2,6-diaminopimelate (DAP), an intermediate involved in the bacterial biosynthesis of lysine and meso-diaminopimelic acid, an essential component of bacterial cell walls. This Magnetococcus marinus (strain ATCC BAA-1437 / JCM 17883 / MC-1) protein is Succinyl-diaminopimelate desuccinylase.